A 547-amino-acid chain; its full sequence is MDKSAFQKQLAALRDHRSAAPASMRQAFAADPQRFQAFTATDGDLLLDWSKCAVDATTMDLLEKLAAAADLEGRRAAMFAGKKINITEDRAVLHTALRNLSGTGVTVDGQDVKADVLSVLDAMGAFADAIRSGKALGATGKKITDIVNIGIGGSDLGPAMATLALAPYHDGPRAHYVSNIDGAHIHDTLKGLSAETTLFIVASKTFTTVETMTNAQTARDWVQKALGKQAVGKHFAAVSTALDLVAKFGIEADRVFGFWDWVGGRYSVWGAIGLPVMIAVGPRNFRAFLDGAHEMDQHFRTAPLAGNLPALLGLVGWWHRVICGYPARAVIPYDQRLSRLPAYLQQLDMESNGKGVTLDGTPVATPTGPLVWGEPGTNGQHAFFQLLHQGTDFIPVEFLAAAVGHEPELKHQHDLLLANCLAQSEALMKGRTLDEARAQMLAKGMKPADVDKIAPHRVFSGNRPSLTILYRKLDPRTFGRLIALYEHRVFVEGTLFNINSFDQWGVELGKELATGLLPVVEGKESAANRDASTRGLVERIHQLRGSE.

The Proton donor role is filled by glutamate 350. Catalysis depends on residues histidine 381 and lysine 510.

This sequence belongs to the GPI family.

It localises to the cytoplasm. The enzyme catalyses alpha-D-glucose 6-phosphate = beta-D-fructose 6-phosphate. Its pathway is carbohydrate biosynthesis; gluconeogenesis. It participates in carbohydrate degradation; glycolysis; D-glyceraldehyde 3-phosphate and glycerone phosphate from D-glucose: step 2/4. Catalyzes the reversible isomerization of glucose-6-phosphate to fructose-6-phosphate. The chain is Glucose-6-phosphate isomerase from Mesorhizobium japonicum (strain LMG 29417 / CECT 9101 / MAFF 303099) (Mesorhizobium loti (strain MAFF 303099)).